The primary structure comprises 782 residues: Endonuclease MutS2 (782 aa).

ATP is bound at residue 336-343 (GPNTGGKT). The Smr domain maps to 707–782 (LDLRGYRYDE…GFGVTVVEIK (76 aa)).

The protein belongs to the DNA mismatch repair MutS family. MutS2 subfamily. In terms of assembly, homodimer. Binds to stalled ribosomes, contacting rRNA.

Endonuclease that is involved in the suppression of homologous recombination and thus may have a key role in the control of bacterial genetic diversity. In terms of biological role, acts as a ribosome collision sensor, splitting the ribosome into its 2 subunits. Detects stalled/collided 70S ribosomes which it binds and splits by an ATP-hydrolysis driven conformational change. Acts upstream of the ribosome quality control system (RQC), a ribosome-associated complex that mediates the extraction of incompletely synthesized nascent chains from stalled ribosomes and their subsequent degradation. Probably generates substrates for RQC. The chain is Endonuclease MutS2 from Staphylococcus saprophyticus subsp. saprophyticus (strain ATCC 15305 / DSM 20229 / NCIMB 8711 / NCTC 7292 / S-41).